A 169-amino-acid chain; its full sequence is Eukaryotic translation initiation factor 5A-2 (169 aa).

The residue at position 64 (K64) is a Hypusine.

This sequence belongs to the eIF-5A family. Post-translationally, lys-51 undergoes hypusination, a unique post-translational modification that consists in the addition of a butylamino group from spermidine to lysine side chain, leading to the formation of the unusual amino acid hypusine. eIF-5As are the only known proteins to undergo this modification, which is essential for their function.

The protein resides in the cytoplasm. It is found in the nucleus. Translation factor that promotes translation elongation and termination, particularly upon ribosome stalling at specific amino acid sequence contexts. Binds between the exit (E) and peptidyl (P) site of the ribosome and promotes rescue of stalled ribosome: specifically required for efficient translation of polyproline-containing peptides as well as other motifs that stall the ribosome. Acts as a ribosome quality control (RQC) cofactor by joining the RQC complex to facilitate peptidyl transfer during CAT tailing step. The polypeptide is Eukaryotic translation initiation factor 5A-2 (tif51b) (Schizosaccharomyces pombe (strain 972 / ATCC 24843) (Fission yeast)).